Here is a 133-residue protein sequence, read N- to C-terminus: p53 and DNA damage-regulated protein 1 (133 aa).

The protein belongs to the prefoldin subunit beta family. As to quaternary structure, component of the PAQosome complex which is responsible for the biogenesis of several protein complexes and which consists of R2TP complex members RUVBL1, RUVBL2, RPAP3 and PIH1D1, URI complex members PFDN2, PFDN6, PDRG1, UXT and URI1 as well as ASDURF, POLR2E and DNAAF10/WDR92.

The protein localises to the cytoplasm. In terms of biological role, may play a role in chaperone-mediated protein folding. The protein is p53 and DNA damage-regulated protein 1 (PDRG1) of Pongo abelii (Sumatran orangutan).